Here is a 276-residue protein sequence, read N- to C-terminus: F-box/LRR-repeat protein 20 (276 aa).

Residues 22-68 form the F-box domain; the sequence is AVINKKLPKELLLRIFSFLDVVTLCRCAQVSRAWNVLALDGSNWQRI. LRR repeat units follow at residues 74-100, 101-126, 127-152, 153-178, 179-204, 205-230, 231-256, and 257-276; these read QRDIEGRVVENISKRCGGFLRKLSLRG, CLGVGDNALRTFAQNCRNIEVLSLNG, CTKTTDATCTSLSKFCSKLRHLDLAS, CTSITNMSLKALSEGCPLLEQLNISW, CDQVTKDGIQALVRGCGGLKALFLKG, CTQLEDEALKYIGAHCPELVTLNLQT, CLQITDEGLITICRGCHKLQSLCASG, and CSNITDAILNALGQNCPRLR.

As to quaternary structure, interacts with SKP1 and CUL1. As to expression, widely expressed, with highest expression in skeletal muscle, heart and brain.

It localises to the cytoplasm. Functionally, substrate-recognition component of the SCF (SKP1-CUL1-F-box protein)-type E3 ubiquitin ligase complex. Role in neural transmission. This is F-box/LRR-repeat protein 20 (Fbxl20) from Rattus norvegicus (Rat).